Reading from the N-terminus, the 329-residue chain is Nuclear pore complex protein NUP35 (329 aa).

Disordered stretches follow at residues 48–105 (NFGG…GKGK) and 123–167 (VSGS…PPRE). The segment covering 123-139 (VSGSPSWWSQSKAGSST) has biased composition (polar residues). The RRM Nup35-type domain maps to 183 to 264 (LDEEEWVTVY…KPVDPIQKQA (82 aa)). The segment at 271-315 (NQGFMPLPPPSSTRNTARPLSRPQYLQNGSAFSPQPSGGAMASPS) is disordered. Residues 282 to 306 (STRNTARPLSRPQYLQNGSAFSPQP) show a composition bias toward polar residues.

It belongs to the Nup35 family. In terms of assembly, part of the nuclear pore complex (NPC). The NPC has an eight-fold symmetrical structure comprising a central transport channel and two rings, the cytoplasmic and nuclear rings, to which eight filaments are attached. The cytoplasmic filaments have loose ends, while the nuclear filaments are joined in a distal ring, forming a nuclear basket. NPCs are highly dynamic in configuration and composition, and can be devided in 3 subcomplexes, the NUP62 subcomplex, the NUP107-160 subcomplex and the NUP93 subcomplex, containing approximately 30 different nucleoporin proteins.

The protein localises to the nucleus. It localises to the nuclear pore complex. This Arabidopsis thaliana (Mouse-ear cress) protein is Nuclear pore complex protein NUP35.